The following is a 110-amino-acid chain: UPF0060 membrane protein MT2717 (110 aa).

A run of 4 helical transmembrane segments spans residues 6 to 26 (ILLF…VWQG), 32 to 52 (GWLW…FATL), 61 to 81 (VLAA…MALD), and 90 to 110 (VIGA…PRGH).

It belongs to the UPF0060 family.

The protein localises to the cell membrane. This is UPF0060 membrane protein MT2717 from Mycobacterium tuberculosis (strain CDC 1551 / Oshkosh).